We begin with the raw amino-acid sequence, 141 residues long: Nucleoside diphosphate kinase (141 aa).

6 residues coordinate ATP: Lys11, Phe59, Arg87, Thr93, Arg104, and Asn114. His117 functions as the Pros-phosphohistidine intermediate in the catalytic mechanism.

It belongs to the NDK family. In terms of assembly, homotetramer. The cofactor is Mg(2+).

The protein localises to the cytoplasm. The catalysed reaction is a 2'-deoxyribonucleoside 5'-diphosphate + ATP = a 2'-deoxyribonucleoside 5'-triphosphate + ADP. It carries out the reaction a ribonucleoside 5'-diphosphate + ATP = a ribonucleoside 5'-triphosphate + ADP. In terms of biological role, major role in the synthesis of nucleoside triphosphates other than ATP. The ATP gamma phosphate is transferred to the NDP beta phosphate via a ping-pong mechanism, using a phosphorylated active-site intermediate. The polypeptide is Nucleoside diphosphate kinase (Polaromonas naphthalenivorans (strain CJ2)).